Consider the following 142-residue polypeptide: MALERTFSIIKPDAVKRNLIGEIYHRIEKAGLQIIAAKMVHLSEEQASGFYAEHEGKPFFEPLKEFMTSGPIMVQVLEGENAIARYRELMGKTNPEEAACGTLRADYALSMRYNSVHGSDSPASAAREIEFFFPESEICPRP.

Lys11, Phe59, Arg87, Thr93, Arg104, and Asn114 together coordinate ATP. The active-site Pros-phosphohistidine intermediate is the His117.

Belongs to the NDK family. In terms of assembly, homotetramer. It depends on Mg(2+) as a cofactor.

Its subcellular location is the cytoplasm. It carries out the reaction dZDP + ATP = dZTP + ADP. The catalysed reaction is a 2'-deoxyribonucleoside 5'-diphosphate + ATP = a 2'-deoxyribonucleoside 5'-triphosphate + ADP. The enzyme catalyses a ribonucleoside 5'-diphosphate + ATP = a ribonucleoside 5'-triphosphate + ADP. It participates in purine metabolism. In terms of biological role, major role in the synthesis of nucleoside triphosphates other than ATP. The ATP gamma phosphate is transferred to the NDP beta phosphate via a ping-pong mechanism, using a phosphorylated active-site intermediate. Functionally, (Microbial infection) Catalyzes the phosphorylation of dZDP to dZTP, when the bacterium is infected by a phage that produces the substrate for the synthesis of dZTP (2- amino-2'-deoxyadenosine 5'-triphosphate), which is then used by the phage as a DNA polymerase substrate. The polypeptide is Nucleoside diphosphate kinase (Vibrio cholerae serotype O1 (strain ATCC 39315 / El Tor Inaba N16961)).